The primary structure comprises 432 residues: EF-hand calcium-binding domain-containing protein 3 (432 aa).

EF-hand domains lie at 45–80 (AQLEAFRNAYNFFTKDRTGCIDSHGLISTIAKLGMN) and 81–116 (LNTYDIYNELKCADLDRDGKINFSDFINVLTDKKLF). Ca(2+) is bound by residues D94, D96, D98, K100, and D105. Y273 carries the phosphotyrosine modification. Positions 394-432 (SMNKSSPSNSGLSSPSDFSESDPETGRKRKRKSSRGFRQ) are disordered. Positions 395–411 (MNKSSPSNSGLSSPSDF) are enriched in low complexity. A compositionally biased stretch (basic residues) spans 420-432 (RKRKRKSSRGFRQ).

This chain is EF-hand calcium-binding domain-containing protein 3 (Efcab3), found in Mus musculus (Mouse).